Consider the following 320-residue polypeptide: Acetyl-coenzyme A carboxylase carboxyl transferase subunit alpha (320 aa).

The 255-residue stretch at 41-295 (KIEEKAQQAL…GDAIAAAFAE (255 aa)) folds into the CoA carboxyltransferase C-terminal domain.

Belongs to the AccA family. Acetyl-CoA carboxylase is a heterohexamer composed of biotin carboxyl carrier protein (AccB), biotin carboxylase (AccC) and two subunits each of ACCase subunit alpha (AccA) and ACCase subunit beta (AccD).

The protein resides in the cytoplasm. The catalysed reaction is N(6)-carboxybiotinyl-L-lysyl-[protein] + acetyl-CoA = N(6)-biotinyl-L-lysyl-[protein] + malonyl-CoA. The protein operates within lipid metabolism; malonyl-CoA biosynthesis; malonyl-CoA from acetyl-CoA: step 1/1. Its function is as follows. Component of the acetyl coenzyme A carboxylase (ACC) complex. First, biotin carboxylase catalyzes the carboxylation of biotin on its carrier protein (BCCP) and then the CO(2) group is transferred by the carboxyltransferase to acetyl-CoA to form malonyl-CoA. In Rhodopseudomonas palustris (strain ATCC BAA-98 / CGA009), this protein is Acetyl-coenzyme A carboxylase carboxyl transferase subunit alpha.